We begin with the raw amino-acid sequence, 200 residues long: NADH-quinone oxidoreductase subunit B (200 aa).

The [4Fe-4S] cluster site is built by Cys-79, Cys-80, Cys-144, and Cys-174.

It belongs to the complex I 20 kDa subunit family. NDH-1 is composed of 14 different subunits. Subunits NuoB, C, D, E, F, and G constitute the peripheral sector of the complex. [4Fe-4S] cluster is required as a cofactor.

It is found in the cell inner membrane. It catalyses the reaction a quinone + NADH + 5 H(+)(in) = a quinol + NAD(+) + 4 H(+)(out). In terms of biological role, NDH-1 shuttles electrons from NADH, via FMN and iron-sulfur (Fe-S) centers, to quinones in the respiratory chain. The immediate electron acceptor for the enzyme in this species is believed to be ubiquinone. Couples the redox reaction to proton translocation (for every two electrons transferred, four hydrogen ions are translocated across the cytoplasmic membrane), and thus conserves the redox energy in a proton gradient. This Caulobacter vibrioides (strain NA1000 / CB15N) (Caulobacter crescentus) protein is NADH-quinone oxidoreductase subunit B.